The following is a 130-amino-acid chain: S-adenosylmethionine decarboxylase proenzyme (130 aa).

Residue Ser-63 is the Schiff-base intermediate with substrate; via pyruvic acid of the active site. Position 63 is a pyruvic acid (Ser); by autocatalysis (Ser-63). His-68 functions as the Proton acceptor; for processing activity in the catalytic mechanism. The Proton donor; for catalytic activity role is filled by Cys-83.

This sequence belongs to the prokaryotic AdoMetDC family. Type 1 subfamily. In terms of assembly, heterotetramer of two alpha and two beta chains arranged as a dimer of alpha/beta heterodimers. Pyruvate is required as a cofactor. Is synthesized initially as an inactive proenzyme. Formation of the active enzyme involves a self-maturation process in which the active site pyruvoyl group is generated from an internal serine residue via an autocatalytic post-translational modification. Two non-identical subunits are generated from the proenzyme in this reaction, and the pyruvate is formed at the N-terminus of the alpha chain, which is derived from the carboxyl end of the proenzyme. The post-translation cleavage follows an unusual pathway, termed non-hydrolytic serinolysis, in which the side chain hydroxyl group of the serine supplies its oxygen atom to form the C-terminus of the beta chain, while the remainder of the serine residue undergoes an oxidative deamination to produce ammonia and the pyruvoyl group blocking the N-terminus of the alpha chain.

The catalysed reaction is S-adenosyl-L-methionine + H(+) = S-adenosyl 3-(methylsulfanyl)propylamine + CO2. It participates in amine and polyamine biosynthesis; S-adenosylmethioninamine biosynthesis; S-adenosylmethioninamine from S-adenosyl-L-methionine: step 1/1. Its function is as follows. Catalyzes the decarboxylation of S-adenosylmethionine to S-adenosylmethioninamine (dcAdoMet), the propylamine donor required for the synthesis of the polyamines spermine and spermidine from the diamine putrescine. The chain is S-adenosylmethionine decarboxylase proenzyme (speH) from Thermotoga maritima (strain ATCC 43589 / DSM 3109 / JCM 10099 / NBRC 100826 / MSB8).